The primary structure comprises 898 residues: Zinc finger protein 574 (898 aa).

3 C2H2-type zinc fingers span residues 16 to 38 (YVCS…QNSH), 76 to 98 (YQCL…QELH), and 126 to 148 (YECV…RQTH). Residue Ser-164 is modified to Phosphoserine. A C2H2-type 4 zinc finger spans residues 213–235 (YKCSECSQLFQMPADFLEHQATH). The interval 243-305 (AEEPATQQET…PRRSSSGESG (63 aa)) is disordered. Residues 273–290 (HSYELRNELRNGEAMGRD) are compositionally biased toward basic and acidic residues. Phosphoserine is present on Ser-301. C2H2-type zinc fingers lie at residues 310–332 (LFCS…LRSH), 337–359 (FKCP…LGDH), 365–387 (FLCV…RRAH), and 393–414 (HSCP…RRTH). The interval 417 to 460 (GGVPLPTTPVPPEEPAISFPEPAPAETGELEAPELPVSEESSAE) is disordered. 6 consecutive C2H2-type zinc fingers follow at residues 467 to 490 (YRCL…RFVH), 496 to 518 (HKCS…LRTH), 524 to 546 (FPCP…RLTH), 552 to 574 (YRCG…RLVH), 580 to 602 (YRCQ…RYHH), and 608 to 631 (YKCR…LVVH). A C2H2-type 15; degenerate zinc finger spans residues 637–660 (HRCPSCGAAFPSSLRLREHRCAAA). The C2H2-type 16 zinc-finger motif lies at 668–690 (FECGTCGKKVGSAARLQAHEAAH). A disordered region spans residues 691–735 (AAAGPGEVLAKEPPAPRAARATRTPVAPSPTALGGTTSAAPAAPA). Over residues 707–734 (RAARATRTPVAPSPTALGGTTSAAPAAP) the composition is skewed to low complexity. At Ser-719 the chain carries Phosphoserine. Phosphothreonine is present on Thr-726. 4 C2H2-type zinc fingers span residues 740–762 (LECS…RRIH), 768–790 (YPCP…RRLH), 796–818 (FACE…RRIH), and 824–846 (YSCP…RKTH). The residue at position 834 (Arg-834) is an Asymmetric dimethylarginine.

The protein belongs to the krueppel C2H2-type zinc-finger protein family.

It localises to the nucleus. In terms of biological role, may be involved in transcriptional regulation. This Rattus norvegicus (Rat) protein is Zinc finger protein 574 (Znf574).